The following is a 439-amino-acid chain: tRNA modification GTPase MnmE (439 aa).

(6S)-5-formyl-5,6,7,8-tetrahydrofolate is bound by residues R24, E81, and K121. The TrmE-type G domain occupies 218 to 363 (GFKVVIAGAP…LRRLIGDIVE (146 aa)). N228 is a K(+) binding site. GTP-binding positions include 228 to 233 (NAGKSS), 247 to 253 (TEIAGTT), and 272 to 275 (DTAG). Residue S232 coordinates Mg(2+). 3 residues coordinate K(+): T247, I249, and T252. T253 contributes to the Mg(2+) binding site. Position 439 (K439) interacts with (6S)-5-formyl-5,6,7,8-tetrahydrofolate.

It belongs to the TRAFAC class TrmE-Era-EngA-EngB-Septin-like GTPase superfamily. TrmE GTPase family. In terms of assembly, homodimer. Heterotetramer of two MnmE and two MnmG subunits. The cofactor is K(+).

Its subcellular location is the cytoplasm. Exhibits a very high intrinsic GTPase hydrolysis rate. Involved in the addition of a carboxymethylaminomethyl (cmnm) group at the wobble position (U34) of certain tRNAs, forming tRNA-cmnm(5)s(2)U34. This chain is tRNA modification GTPase MnmE, found in Rhizobium johnstonii (strain DSM 114642 / LMG 32736 / 3841) (Rhizobium leguminosarum bv. viciae).